A 262-amino-acid chain; its full sequence is tRNA (guanine-N(7)-)-methyltransferase (262 aa).

The disordered stretch occupies residues 1–58 (MLPQDTNTDPLPGDDAESASGKSADASQGTPNPGDEVAHPRRIRSFVRRAGRTSTGQQ). The segment covering 40-51 (PRRIRSFVRRAG) has biased composition (basic residues). The S-adenosyl-L-methionine site is built by Glu92, Glu117, Asp144, and Asp167. Asp167 is an active-site residue. Residue Lys171 participates in substrate binding. The segment at 173-178 (RHNKRR) is interaction with RNA. Substrate contacts are provided by residues Asp203 and 241–244 (TKFE).

This sequence belongs to the class I-like SAM-binding methyltransferase superfamily. TrmB family.

The enzyme catalyses guanosine(46) in tRNA + S-adenosyl-L-methionine = N(7)-methylguanosine(46) in tRNA + S-adenosyl-L-homocysteine. Its pathway is tRNA modification; N(7)-methylguanine-tRNA biosynthesis. In terms of biological role, catalyzes the formation of N(7)-methylguanine at position 46 (m7G46) in tRNA. In Cupriavidus metallidurans (strain ATCC 43123 / DSM 2839 / NBRC 102507 / CH34) (Ralstonia metallidurans), this protein is tRNA (guanine-N(7)-)-methyltransferase.